A 138-amino-acid polypeptide reads, in one-letter code: Acidic phospholipase A2 Tpu-E6a (138 aa).

The N-terminal stretch at 1–16 (MRTLWIMAVLLLGVKG) is a signal peptide. 7 disulfide bridges follow: Cys42/Cys131, Cys44/Cys60, Cys59/Cys111, Cys65/Cys138, Cys66/Cys104, Cys73/Cys97, and Cys91/Cys102. Ca(2+) contacts are provided by Tyr43, Gly45, and Gly47. His63 is a catalytic residue. Asp64 lines the Ca(2+) pocket. Asp105 is a catalytic residue.

As to quaternary structure, monomer. Requires Ca(2+) as cofactor. As to expression, expressed by the venom gland.

Its subcellular location is the secreted. The catalysed reaction is a 1,2-diacyl-sn-glycero-3-phosphocholine + H2O = a 1-acyl-sn-glycero-3-phosphocholine + a fatty acid + H(+). Snake venom phospholipase A2 (PLA2) that impairs hemostasis. It weakly inhibits ADP-induced platelet aggregation when tested on platelet rich plasma from human and rabbit blood (15-25% of inhibition at 5-10 ug of enzyme), and dose-dependently inhibits blood coagulation, possibly by inhibiting thrombin activation. Exhibits high hydrolytic activities toward L-dipalmitoyl phosphatidylcholine. PLA2 catalyzes the calcium-dependent hydrolysis of the 2-acyl groups in 3-sn-phosphoglycerides. This Craspedocephalus puniceus (Flat-nosed pitviper) protein is Acidic phospholipase A2 Tpu-E6a.